We begin with the raw amino-acid sequence, 157 residues long: Root allergen protein (157 aa).

It belongs to the BetVI family.

The polypeptide is Root allergen protein (Taraxacum officinale (Common dandelion)).